The chain runs to 1093 residues: Carbamoyl phosphate synthase large chain (1093 aa).

Positions 1 to 412 are carboxyphosphate synthetic domain; sequence MPRRNDIRKI…SLMKALRSLE (412 aa). Arginine 139, arginine 179, glycine 185, glycine 186, glutamate 218, valine 220, glutamate 225, glycine 251, valine 252, histidine 253, glutamine 295, and glutamate 309 together coordinate ATP. The ATP-grasp 1 domain maps to 143 to 338; it reads KDAMTRIGLD…IAKIAAKLAV (196 aa). Residues glutamine 295, glutamate 309, and asparagine 311 each contribute to the Mg(2+) site. Residues glutamine 295, glutamate 309, and asparagine 311 each coordinate Mn(2+). The segment at 413–560 is oligomerization domain; the sequence is TGKRVGAEVL…YSSYEEEDEA (148 aa). Positions 561–952 are carbamoyl phosphate synthetic domain; it reads PQTDKRKVII…AFAKAQLSAG (392 aa). Positions 689–880 constitute an ATP-grasp 2 domain; the sequence is GKLLEQLQIP…LAKIASRLMT (192 aa). ATP is bound by residues arginine 725, histidine 764, leucine 766, glutamate 771, glycine 796, isoleucine 797, histidine 798, serine 799, glutamine 839, and glutamate 851. Glutamine 839, glutamate 851, and asparagine 853 together coordinate Mg(2+). The Mn(2+) site is built by glutamine 839, glutamate 851, and asparagine 853. The 141-residue stretch at 953-1093 folds into the MGS-like domain; sequence LILPSSGTVF…QLLHAGHAVK (141 aa). Residues 953–1093 are allosteric domain; that stretch reads LILPSSGTVF…QLLHAGHAVK (141 aa).

Belongs to the CarB family. In terms of assembly, composed of two chains; the small (or glutamine) chain promotes the hydrolysis of glutamine to ammonia, which is used by the large (or ammonia) chain to synthesize carbamoyl phosphate. Tetramer of heterodimers (alpha,beta)4. Mg(2+) is required as a cofactor. Requires Mn(2+) as cofactor.

It carries out the reaction hydrogencarbonate + L-glutamine + 2 ATP + H2O = carbamoyl phosphate + L-glutamate + 2 ADP + phosphate + 2 H(+). The catalysed reaction is hydrogencarbonate + NH4(+) + 2 ATP = carbamoyl phosphate + 2 ADP + phosphate + 2 H(+). It functions in the pathway amino-acid biosynthesis; L-arginine biosynthesis; carbamoyl phosphate from bicarbonate: step 1/1. It participates in pyrimidine metabolism; UMP biosynthesis via de novo pathway; (S)-dihydroorotate from bicarbonate: step 1/3. Its function is as follows. Large subunit of the glutamine-dependent carbamoyl phosphate synthetase (CPSase). CPSase catalyzes the formation of carbamoyl phosphate from the ammonia moiety of glutamine, carbonate, and phosphate donated by ATP, constituting the first step of 2 biosynthetic pathways, one leading to arginine and/or urea and the other to pyrimidine nucleotides. The large subunit (synthetase) binds the substrates ammonia (free or transferred from glutamine from the small subunit), hydrogencarbonate and ATP and carries out an ATP-coupled ligase reaction, activating hydrogencarbonate by forming carboxy phosphate which reacts with ammonia to form carbamoyl phosphate. The polypeptide is Carbamoyl phosphate synthase large chain (Acidobacterium capsulatum (strain ATCC 51196 / DSM 11244 / BCRC 80197 / JCM 7670 / NBRC 15755 / NCIMB 13165 / 161)).